The chain runs to 358 residues: SPbeta prophage-derived probable integrase/recombinase YopP (358 aa).

The region spanning 23-114 is the Core-binding (CB) domain; sequence NKDIRSSSGN…SLKMLYTYLE (92 aa). The region spanning 137–319 is the Tyr recombinase domain; sequence KNWDKTTQTE…NIANSAGVTM (183 aa). Active-site residues include Arg178, Lys206, His268, and His295. The active-site O-(3'-phospho-DNA)-tyrosine intermediate is Tyr304.

It belongs to the 'phage' integrase family.

Its function is as follows. Probable recombinase that does not seem to have a role in chromosome dimer resolution per se but rather may have some facilitative role during chromosome partitioning in general. This chain is SPbeta prophage-derived probable integrase/recombinase YopP (yopP), found in Bacillus subtilis (strain 168).